A 349-amino-acid polypeptide reads, in one-letter code: Mitomycin biosynthesis 6-O-methyltransferase (349 aa).

Residues Ser167, Gly190, Glu213–Arg214, Asp240–Phe241, and Lys255 each bind S-adenosyl-L-methionine. Catalysis depends on His259, which acts as the Proton acceptor. Residue Asn288 participates in substrate binding.

It belongs to the class I-like SAM-binding methyltransferase superfamily. Cation-independent O-methyltransferase family. COMT subfamily. Homodimer.

It catalyses the reaction 6-demethylmitomycin A + S-adenosyl-L-methionine = mitomycin A + S-adenosyl-L-homocysteine. The enzyme catalyses 6-demethylmitomycin B + S-adenosyl-L-methionine = mitomycin B + S-adenosyl-L-homocysteine. Its activity is regulated as follows. Completely inhibited by Zn(2+) and Cu(2+). Functionally, involved in the biosynthesis of the quinone methoxy group present in the mitomycin A and B, which are used as anticancer agents. In vitro, catalyzes the 6-O-methylation of both C9-beta- and C9-alpha-configured 6-hydroxymitomycins via the transfer of the S-methyl group of S-adenosyl-L-methionine (AdoMet) to the 6-demethylmitomycin A and B. It can also use hydroxyquinone as substrate. This chain is Mitomycin biosynthesis 6-O-methyltransferase, found in Streptomyces lavendulae.